The sequence spans 141 residues: Actin-depolymerizing factor 9 (141 aa).

Position 8 is a phosphoserine (Ser-8). The ADF-H domain occupies 8–141 (SGMWMTDDCK…GFDKIQDRAK (134 aa)).

Belongs to the actin-binding proteins ADF family.

The protein localises to the cytoplasm. The protein resides in the cytoskeleton. In terms of biological role, does not display typical F-actin depolymerizing activity. Exhibits a high ability to stabilize and cross-link actin filaments. Functions as an actin bundling protein with the highest efficiency under acidic conditions. May play a role in the modulation of levels of histone H3 lysine 4 trimethylation and H3 lysine 9 and 14 acetylation at the FLC locus. The sequence is that of Actin-depolymerizing factor 9 (ADF9) from Arabidopsis thaliana (Mouse-ear cress).